The sequence spans 534 residues: CTP synthase (534 aa).

An amidoligase domain region spans residues 1 to 268; that stretch reads MAAKYIFVTG…DQIVCDHLQL (268 aa). CTP is bound at residue S14. S14 lines the UTP pocket. 15–20 lines the ATP pocket; it reads SLGKGI. Y55 serves as a coordination point for L-glutamine. D72 provides a ligand contact to ATP. The Mg(2+) site is built by D72 and E142. CTP contacts are provided by residues 149–151, 189–194, and K225; these read DIE and KSKPTQ. Residues 189 to 194 and K225 contribute to the UTP site; that span reads KSKPTQ. The Glutamine amidotransferase type-1 domain occupies 293–534; the sequence is RIAIVGKYVE…FVRNALAAQA (242 aa). G355 provides a ligand contact to L-glutamine. C382 (nucleophile; for glutamine hydrolysis) is an active-site residue. L-glutamine is bound by residues 383–386, E406, and R463; that span reads LGMQ. Catalysis depends on residues H508 and E510.

The protein belongs to the CTP synthase family. Homotetramer.

The enzyme catalyses UTP + L-glutamine + ATP + H2O = CTP + L-glutamate + ADP + phosphate + 2 H(+). It carries out the reaction L-glutamine + H2O = L-glutamate + NH4(+). It catalyses the reaction UTP + NH4(+) + ATP = CTP + ADP + phosphate + 2 H(+). It functions in the pathway pyrimidine metabolism; CTP biosynthesis via de novo pathway; CTP from UDP: step 2/2. With respect to regulation, allosterically activated by GTP, when glutamine is the substrate; GTP has no effect on the reaction when ammonia is the substrate. The allosteric effector GTP functions by stabilizing the protein conformation that binds the tetrahedral intermediate(s) formed during glutamine hydrolysis. Inhibited by the product CTP, via allosteric rather than competitive inhibition. Catalyzes the ATP-dependent amination of UTP to CTP with either L-glutamine or ammonia as the source of nitrogen. Regulates intracellular CTP levels through interactions with the four ribonucleotide triphosphates. The polypeptide is CTP synthase (Shouchella clausii (strain KSM-K16) (Alkalihalobacillus clausii)).